Consider the following 71-residue polypeptide: Translation initiation factor IF-1 (71 aa).

Positions 1–71 (MSKDDLIQFT…LTKGRVIHRH (71 aa)) constitute an S1-like domain.

The protein belongs to the IF-1 family. As to quaternary structure, component of the 30S ribosomal translation pre-initiation complex which assembles on the 30S ribosome in the order IF-2 and IF-3, IF-1 and N-formylmethionyl-tRNA(fMet); mRNA recruitment can occur at any time during PIC assembly.

Its subcellular location is the cytoplasm. Its function is as follows. One of the essential components for the initiation of protein synthesis. Stabilizes the binding of IF-2 and IF-3 on the 30S subunit to which N-formylmethionyl-tRNA(fMet) subsequently binds. Helps modulate mRNA selection, yielding the 30S pre-initiation complex (PIC). Upon addition of the 50S ribosomal subunit IF-1, IF-2 and IF-3 are released leaving the mature 70S translation initiation complex. The protein is Translation initiation factor IF-1 of Rickettsia conorii (strain ATCC VR-613 / Malish 7).